Here is a 493-residue protein sequence, read N- to C-terminus: Anthranilate synthase component 1 (493 aa).

L-tryptophan contacts are provided by residues serine 48 and 273-275; that span reads PYM. 308–309 is a binding site for chorismate; that stretch reads GT. Glutamate 335 contributes to the Mg(2+) binding site. Residues tyrosine 423, arginine 443, 457-459, and glycine 459 contribute to the chorismate site; that span reads GGG. Position 472 (glutamate 472) interacts with Mg(2+).

This sequence belongs to the anthranilate synthase component I family. As to quaternary structure, heterotetramer consisting of two non-identical subunits: a beta subunit (TrpG) and a large alpha subunit (TrpE). The cofactor is Mg(2+).

It carries out the reaction chorismate + L-glutamine = anthranilate + pyruvate + L-glutamate + H(+). The protein operates within amino-acid biosynthesis; L-tryptophan biosynthesis; L-tryptophan from chorismate: step 1/5. Feedback inhibited by tryptophan. Its function is as follows. Part of a heterotetrameric complex that catalyzes the two-step biosynthesis of anthranilate, an intermediate in the biosynthesis of L-tryptophan. In the first step, the glutamine-binding beta subunit (TrpG) of anthranilate synthase (AS) provides the glutamine amidotransferase activity which generates ammonia as a substrate that, along with chorismate, is used in the second step, catalyzed by the large alpha subunit of AS (TrpE) to produce anthranilate. In the absence of TrpG, TrpE can synthesize anthranilate directly from chorismate and high concentrations of ammonia. This chain is Anthranilate synthase component 1 (trpE), found in Pseudomonas putida (Arthrobacter siderocapsulatus).